A 494-amino-acid chain; its full sequence is ATP synthase subunit beta, plastid (494 aa).

Position 169 to 176 (169 to 176 (GGAGVGKT)) interacts with ATP.

The protein belongs to the ATPase alpha/beta chains family. F-type ATPases have 2 components, CF(1) - the catalytic core - and CF(0) - the membrane proton channel. CF(1) has five subunits: alpha(3), beta(3), gamma(1), delta(1), epsilon(1). CF(0) has four main subunits: a(1), b(1), b'(1) and c(9-12).

The protein localises to the plastid membrane. It carries out the reaction ATP + H2O + 4 H(+)(in) = ADP + phosphate + 5 H(+)(out). Produces ATP from ADP in the presence of a proton gradient across the membrane. The catalytic sites are hosted primarily by the beta subunits. The chain is ATP synthase subunit beta, plastid (atpB) from Cuscuta sandwichiana (Kauna'oa).